Here is a 389-residue protein sequence, read N- to C-terminus: Succinyl-diaminopimelate desuccinylase (389 aa).

His-72 contributes to the Zn(2+) binding site. Asp-74 is a catalytic residue. Asp-105 is a Zn(2+) binding site. Glu-144 serves as the catalytic Proton acceptor. Residues Glu-145, Glu-173, and His-362 each contribute to the Zn(2+) site.

The protein belongs to the peptidase M20A family. DapE subfamily. As to quaternary structure, homodimer. Zn(2+) serves as cofactor. It depends on Co(2+) as a cofactor.

It carries out the reaction N-succinyl-(2S,6S)-2,6-diaminopimelate + H2O = (2S,6S)-2,6-diaminopimelate + succinate. Its pathway is amino-acid biosynthesis; L-lysine biosynthesis via DAP pathway; LL-2,6-diaminopimelate from (S)-tetrahydrodipicolinate (succinylase route): step 3/3. Its function is as follows. Catalyzes the hydrolysis of N-succinyl-L,L-diaminopimelic acid (SDAP), forming succinate and LL-2,6-diaminopimelate (DAP), an intermediate involved in the bacterial biosynthesis of lysine and meso-diaminopimelic acid, an essential component of bacterial cell walls. This chain is Succinyl-diaminopimelate desuccinylase, found in Rhodopseudomonas palustris (strain HaA2).